The chain runs to 484 residues: Falcipain-2a (484 aa).

Residues 1-35 lie on the Cytoplasmic side of the membrane; it reads MDYNMDYAPHEVISQQGERFVDKYVDRKILKNKKS. Residues 1 to 243 constitute a propeptide, activation peptide; sequence MDYNMDYAPH…PLKNSKYLLD (243 aa). Residues 16-25 carry the Bipartite vacuolar targeting signal 1 motif; that stretch reads QGERFVDKYV. A helical; Signal-anchor for type II membrane protein membrane pass occupies residues 36-56; it reads LLVIISLSVLSVVGFVLFYFT. Residues 57–484 are Lumenal-facing; sequence PNSRKSDLFK…GTDAFIPLIE (428 aa). N67 is a glycosylation site (N-linked (GlcNAc...) asparagine). Positions 84–105 match the Bipartite vacuolar targeting signal 2 motif; that stretch reads KSPNGKKFIVSKIDEALSFYDS. The Nose motif; required for the correct folding of the mature form motif lies at 244 to 260; that stretch reads QMNYEEVIKKYKGNENF. 4 disulfides stabilise this stretch: C282/C323, C316/C357, C342/C362, and C411/C472. Residue C285 is part of the active site. H417 is a catalytic residue. The Arm motif; binds to host hemoglobin and required for the inhibitory interaction between the propeptide and the catalytic domain signature appears at 428-437; it reads EIVNPLTKKG. N447 is an active-site residue.

This sequence belongs to the peptidase C1 family. Component of the hemozoin formation complex (HFC) composed of falcipains FP2A and/or FP2B, plasmepsins PMII, PMIII/HAP and PMIV, heme detoxifying protein HDP and falcilysin FLN. The HFC complex is involved in hemoglobin degradation and detoxification of heme in the food vacuole during the asexual blood stage. In terms of processing, auto-cleaved to remove the propeptide.

The protein resides in the vacuole. It localises to the membrane. Its activity is regulated as follows. Inhibited by cysteine protease inhibitor ICP. Inhibited by heme and heme analogs. Cysteine protease which cleaves native host hemoglobin and globin in the food vacuole during the asexual blood stage. The binding to host hemoglobin is pH-sensitive and only occurs at acidic pH. Cleaves ankyrin and protein 4.1, two components of host erythrocyte membrane cytoskeleton required for the stability of the erythrocyte membrane, and thus may be involved in parasite release. Preferentially cleaves substrates which have an arginine or lysine at the P1 position and a leucine or phenylalanine at the P2 position. This is Falcipain-2a from Plasmodium falciparum (isolate 3D7).